Here is a 172-residue protein sequence, read N- to C-terminus: Ferritin-2 heavy chain (172 aa).

Residues 8 to 157 enclose the Ferritin-like diiron domain; the sequence is QSFATECENA…DYLTETQRVG (150 aa). Fe cation-binding residues include Glu25, Glu60, His63, Glu105, and Gln139.

Belongs to the ferritin family. As to quaternary structure, oligomer of 24 subunits. The functional molecule forms a roughly spherical shell with a diameter of 12 nm and contains a central cavity into which the insoluble mineral iron core is deposited.

It catalyses the reaction 4 Fe(2+) + O2 + 4 H(+) = 4 Fe(3+) + 2 H2O. In terms of biological role, stores iron in a soluble, non-toxic, readily available form. Important for iron homeostasis. Has ferroxidase activity. Iron is taken up in the ferrous form and deposited as ferric hydroxides after oxidation. This chain is Ferritin-2 heavy chain (SCM-2), found in Schistosoma mansoni (Blood fluke).